A 309-amino-acid polypeptide reads, in one-letter code: Protein EXORDIUM-like 1 (309 aa).

Positions 1–23 (MASFVMGYFLLFAVAFMCLDART) are cleaved as a signal peptide.

Belongs to the EXORDIUM family.

The protein resides in the secreted. It localises to the extracellular space. Its subcellular location is the apoplast. May play a role in a brassinosteroid-dependent regulatory pathway that controls growth and development under low carbon and energy availability. The polypeptide is Protein EXORDIUM-like 1 (EXL1) (Arabidopsis thaliana (Mouse-ear cress)).